The sequence spans 115 residues: Ustilagic acid biosynthesis cluster protein orf3 (115 aa).

Residues 1–38 form the signal peptide; it reads MTYSKIACSLGKRGIARAPNQASSFFLLLFLFAKFSQQ. A disordered region spans residues 42 to 62; that stretch reads SPCLASSGVAKSRGPASTDRP.

The protein operates within secondary metabolite biosynthesis. Part of the gene cluster that mediates the biosynthesis of the glycolipid biosurfactant ustilagic acid (UA). UA is a secreted cellobiose glycolipid that is toxic for many microorganisms and confers biocontrol activity to U.maydis. UA consists of 15,16-dihydroxypalmitic or 2,15,16-trihydroxypalmitic acid, which is O-glycosidically linked to cellobiose at its terminal hydroxyl group. In addition, the cellobiose moiety is acetylated and acylated with a short-chain hydroxy fatty acid. UA biosynthesis starts with omega-hydroxylation of palmitic acid catalyzed by the cytochrome P450 monooxygenase cyp1. Terminal hydroxylation of palmitic acid precedes subterminal hydroxylation catalyzed by the cytochrome P450 monooxygenase cyp2. Sequential glucosylation of the hydroxy fatty acid is probably catalyzed by the glycosyltransferase ugt1. The cellobiose lipid is further decorated by acetylation of the proximal glucose residue and by acylation with a short-chain beta-hydroxy fatty acid at the distal glucose residue. The acyltransferase uat1 may be a good candidate for catalyzing either acetylation or acylation of the cellobiose lipid. The fatty acid synthase fas2 may be involved in synthesis of the carbon backbone of the short-chain beta-hydroxy fatty acid esterified to the cellobiose disaccharide. The secreted UA consists of a mixture of both alpha-hydroxylated and non-hydroxylated glycolipids; therefore, alpha-hydroxylation of the long-chain fatty, catalyzed by the fatty acid hydroxylase ahd1, occurs late in UA biosynthesis and may be the last step before secretion. This chain is Ustilagic acid biosynthesis cluster protein orf3, found in Mycosarcoma maydis (Corn smut fungus).